Reading from the N-terminus, the 122-residue chain is MAHGVDRTRRIGEQMRRDLAQALVDIVHHPHASLLSFTAVHLTRDLSFAKVYVTHVLDNEEERSELVAELNAKAGQFRHYLAKNLSIRKVPELQFYYDQSVEYGARMEQLLTHLVKDSEHKD.

This sequence belongs to the RbfA family. As to quaternary structure, monomer. Binds 30S ribosomal subunits, but not 50S ribosomal subunits or 70S ribosomes.

It localises to the cytoplasm. Functionally, one of several proteins that assist in the late maturation steps of the functional core of the 30S ribosomal subunit. Associates with free 30S ribosomal subunits (but not with 30S subunits that are part of 70S ribosomes or polysomes). Required for efficient processing of 16S rRNA. May interact with the 5'-terminal helix region of 16S rRNA. This Dichelobacter nodosus (strain VCS1703A) protein is Ribosome-binding factor A.